Consider the following 1201-residue polypeptide: ATP-dependent helicase/deoxyribonuclease subunit B (1201 aa).

It belongs to the helicase family. AddB/RexB type 2 subfamily. Heterodimer of AddA and RexB. Requires Mg(2+) as cofactor.

Functionally, the heterodimer acts as both an ATP-dependent DNA helicase and an ATP-dependent, dual-direction single-stranded exonuclease. Recognizes the chi site generating a DNA molecule suitable for the initiation of homologous recombination. This subunit has 5' -&gt; 3' nuclease activity but not helicase activity. The sequence is that of ATP-dependent helicase/deoxyribonuclease subunit B from Levilactobacillus brevis (strain ATCC 367 / BCRC 12310 / CIP 105137 / JCM 1170 / LMG 11437 / NCIMB 947 / NCTC 947) (Lactobacillus brevis).